Consider the following 273-residue polypeptide: tRNA (guanine-N(7)-)-methyltransferase (273 aa).

Over residues 1 to 31 (MSQHPDINTNVDATSLTDDQKSLDTNATSGN) the composition is skewed to polar residues. A disordered region spans residues 1–36 (MSQHPDINTNVDATSLTDDQKSLDTNATSGNEVAPD). The S-adenosyl-L-methionine site is built by Glu-105, Glu-130, Asp-157, and Asp-179. The active site involves Asp-179. Residues Lys-183, Asp-215, and 252–255 (TKFE) contribute to the substrate site.

It belongs to the class I-like SAM-binding methyltransferase superfamily. TrmB family.

It carries out the reaction guanosine(46) in tRNA + S-adenosyl-L-methionine = N(7)-methylguanosine(46) in tRNA + S-adenosyl-L-homocysteine. Its pathway is tRNA modification; N(7)-methylguanine-tRNA biosynthesis. In terms of biological role, catalyzes the formation of N(7)-methylguanine at position 46 (m7G46) in tRNA. This chain is tRNA (guanine-N(7)-)-methyltransferase, found in Psychrobacter cryohalolentis (strain ATCC BAA-1226 / DSM 17306 / VKM B-2378 / K5).